Here is a 257-residue protein sequence, read N- to C-terminus: 3-oxo-5-alpha-steroid 4-dehydrogenase 1 (257 aa).

6 helical membrane-spanning segments follow: residues Phe7–Leu27, Ala50–Ala70, Ile84–Ile104, Pro109–Gln129, Phe149–Val169, and Ala208–Phe228.

It belongs to the steroid 5-alpha reductase family.

The protein resides in the microsome membrane. Its subcellular location is the endoplasmic reticulum membrane. It carries out the reaction a 3-oxo-5alpha-steroid + NADP(+) = a 3-oxo-Delta(4)-steroid + NADPH + H(+). The enzyme catalyses 5alpha-pregnane-3,20-dione + NADP(+) = progesterone + NADPH + H(+). The catalysed reaction is 17beta-hydroxy-5alpha-androstan-3-one + NADP(+) = testosterone + NADPH + H(+). It catalyses the reaction androst-4-ene-3,17-dione + NADPH + H(+) = 5alpha-androstan-3,17-dione + NADP(+). Its function is as follows. Converts testosterone into 5-alpha-dihydrotestosterone and progesterone or corticosterone into their corresponding 5-alpha-3-oxosteroids. It plays a central role in sexual differentiation and androgen physiology. In Bos taurus (Bovine), this protein is 3-oxo-5-alpha-steroid 4-dehydrogenase 1 (SRD5A1).